A 311-amino-acid chain; its full sequence is Phosphoribosylamine--glycine ligase (311 aa).

The ATP-grasp domain occupies 1-191 (DPRVRKQYIQ…LVQVLLAACR (191 aa)).

It belongs to the GARS family.

Its subcellular location is the plastid. It localises to the chloroplast. The enzyme catalyses 5-phospho-beta-D-ribosylamine + glycine + ATP = N(1)-(5-phospho-beta-D-ribosyl)glycinamide + ADP + phosphate + H(+). It functions in the pathway purine metabolism; IMP biosynthesis via de novo pathway; N(1)-(5-phospho-D-ribosyl)glycinamide from 5-phospho-alpha-D-ribose 1-diphosphate: step 2/2. This is Phosphoribosylamine--glycine ligase (PUR2) from Vigna unguiculata (Cowpea).